A 207-amino-acid polypeptide reads, in one-letter code: Small ribosomal subunit protein uS4 (207 aa).

The 64-residue stretch at 97–160 (SRLDNVVYRM…KKQARIVEAL (64 aa)) folds into the S4 RNA-binding domain.

The protein belongs to the universal ribosomal protein uS4 family. Part of the 30S ribosomal subunit. Contacts protein S5. The interaction surface between S4 and S5 is involved in control of translational fidelity.

Its function is as follows. One of the primary rRNA binding proteins, it binds directly to 16S rRNA where it nucleates assembly of the body of the 30S subunit. In terms of biological role, with S5 and S12 plays an important role in translational accuracy. This Burkholderia pseudomallei (strain 1106a) protein is Small ribosomal subunit protein uS4.